Reading from the N-terminus, the 391-residue chain is GTPase Obg (391 aa).

An Obg domain is found at 1-159 (MKFIDEALIR…RDLLLELMLL (159 aa)). Residues 160–333 (ADVGMLGLPN…LTRDIMDFIE (174 aa)) form the OBG-type G domain. GTP is bound by residues 166-173 (GLPNAGKS), 191-195 (FTTLV), 213-216 (DIPG), 283-286 (NKID), and 314-316 (SAA). The Mg(2+) site is built by serine 173 and threonine 193.

The protein belongs to the TRAFAC class OBG-HflX-like GTPase superfamily. OBG GTPase family. As to quaternary structure, monomer. Mg(2+) serves as cofactor.

Its subcellular location is the cytoplasm. Functionally, an essential GTPase which binds GTP, GDP and possibly (p)ppGpp with moderate affinity, with high nucleotide exchange rates and a fairly low GTP hydrolysis rate. Plays a role in control of the cell cycle, stress response, ribosome biogenesis and in those bacteria that undergo differentiation, in morphogenesis control. The sequence is that of GTPase Obg from Actinobacillus pleuropneumoniae serotype 5b (strain L20).